The following is a 305-amino-acid chain: Popeye domain-containing protein 3 (305 aa).

The N-linked (GlcNAc...) asparagine glycan is linked to Asn4. A run of 3 helical transmembrane segments spans residues 34-54 (SILF…LYVF), 55-75 (SLLG…VCAA), and 77-99 (IFSW…TYQV). The disordered stretch occupies residues 273 to 305 (PETPPVPPPRRLQRRSSGRPRPGVPNCSSPRKQ). The N-linked (GlcNAc...) asparagine glycan is linked to Asn298.

The protein belongs to the popeye family. As to expression, expressed first preferentially in atrium and later also in the subepicardial compact layer of the ventricles.

The protein localises to the membrane. May play a role in the maintenance of heart function mediated, at least in part, through cAMP-binding. May play a role in the regulation of KCNK2-mediated current amplitude. The sequence is that of Popeye domain-containing protein 3 (POPDC3) from Gallus gallus (Chicken).